The chain runs to 703 residues: Histone-lysine N-methyltransferase SETDB2 (703 aa).

The 71-residue stretch at 178 to 248 (FTKGNPLQLP…DNFSFNNHVR (71 aa)) folds into the MBD domain. The Pre-SET domain maps to 310–384 (KCCNCTDGCL…LCQNRVVQHG (75 aa)). Zn(2+)-binding residues include Cys-312, Cys-314, Cys-318, Cys-324, Cys-326, Cys-365, Cys-369, Cys-371, and Cys-376. The 292-residue stretch at 387-678 (LRLQVFKTNT…AGTELTWDYS (292 aa)) folds into the SET domain. 397–399 (KGW) serves as a coordination point for S-adenosyl-L-methionine. The disordered stretch occupies residues 492 to 588 (TFSPRQARSG…SSSVISGGHP (97 aa)). A compositionally biased stretch (basic residues) spans 511 to 525 (RRPKTKTSMLQKRRR). The segment covering 550-560 (PEQKSSAGTKI) has biased composition (polar residues). Residues 571–586 (SGYVSEESSSSVISGG) show a composition bias toward low complexity. S-adenosyl-L-methionine contacts are provided by residues Arg-632 and 635-636 (NH). Zn(2+) contacts are provided by Cys-638, Cys-691, Cys-693, and Cys-698.

Belongs to the class V-like SAM-binding methyltransferase superfamily.

The protein resides in the nucleus. It is found in the chromosome. It catalyses the reaction N(6),N(6)-dimethyl-L-lysyl(9)-[histone H3] + S-adenosyl-L-methionine = N(6),N(6),N(6)-trimethyl-L-lysyl(9)-[histone H3] + S-adenosyl-L-homocysteine + H(+). In terms of biological role, histone methyltransferase involved in left-right axis specification in early development and mitosis. Specifically trimethylates 'Lys-9' of histone H3 (H3K9me3). H3K9me3 is a specific tag for epigenetic transcriptional repression that recruits HP1 (CBX1, CBX3 and/or CBX5) proteins to methylated histones. Contributes to H3K9me3 in both the interspersed repetitive elements and centromere-associated repeats. Plays a role in chromosome condensation and segregation during mitosis. The protein is Histone-lysine N-methyltransferase SETDB2 (setdb2) of Xenopus laevis (African clawed frog).